The following is a 289-amino-acid chain: Growth hormone-regulated TBC protein 1 (289 aa).

Residues 41-211 (LVILTKRAIK…RIWDCLFNEG (171 aa)) enclose the Rab-GAP TBC domain.

In terms of biological role, may act as a GTPase-activating protein for Rab family protein(s). The protein is Growth hormone-regulated TBC protein 1 (Grtp1) of Rattus norvegicus (Rat).